Consider the following 128-residue polypeptide: Fluoride-specific ion channel FluC (128 aa).

Transmembrane regions (helical) follow at residues 5-25, 35-55, 67-87, and 96-116; these read IVAI…LSIG, LGTL…VVAF, LFVI…SVEV, and FGWA…LTGL. Positions 75 and 78 each coordinate Na(+).

It belongs to the fluoride channel Fluc/FEX (TC 1.A.43) family.

The protein resides in the cell inner membrane. The catalysed reaction is fluoride(in) = fluoride(out). Na(+) is not transported, but it plays an essential structural role and its presence is essential for fluoride channel function. Fluoride-specific ion channel. Important for reducing fluoride concentration in the cell, thus reducing its toxicity. The chain is Fluoride-specific ion channel FluC from Burkholderia thailandensis (strain ATCC 700388 / DSM 13276 / CCUG 48851 / CIP 106301 / E264).